Consider the following 401-residue polypeptide: Adenylosuccinate synthetase (401 aa).

GTP-binding positions include 12–18 (GDEGKGK) and 40–42 (GHT). Catalysis depends on aspartate 13, which acts as the Proton acceptor. Residues aspartate 13 and glycine 40 each contribute to the Mg(2+) site. Residues 13–16 (DEGK), 38–41 (NAGH), threonine 128, arginine 142, glutamine 212, threonine 227, and arginine 290 contribute to the IMP site. Histidine 41 serves as the catalytic Proton donor. 286 to 292 (ATTRRPR) contributes to the substrate binding site. GTP-binding positions include arginine 292, 318–320 (KAD), and 390–392 (STG).

Belongs to the adenylosuccinate synthetase family. Homodimer. Mg(2+) is required as a cofactor.

It is found in the cytoplasm. It catalyses the reaction IMP + L-aspartate + GTP = N(6)-(1,2-dicarboxyethyl)-AMP + GDP + phosphate + 2 H(+). Its pathway is purine metabolism; AMP biosynthesis via de novo pathway; AMP from IMP: step 1/2. Functionally, plays an important role in the de novo pathway of purine nucleotide biosynthesis. Catalyzes the first committed step in the biosynthesis of AMP from IMP. The protein is Adenylosuccinate synthetase of Pseudothermotoga lettingae (strain ATCC BAA-301 / DSM 14385 / NBRC 107922 / TMO) (Thermotoga lettingae).